The primary structure comprises 318 residues: Taste receptor type 2 member 60 (318 aa).

At 1–7 (MNGDHMV) the chain is on the extracellular side. A helical transmembrane segment spans residues 8–28 (LGSSVTDKKAIILVTILLLLR). The Cytoplasmic segment spans residues 29–40 (LVAIAGNGFITA). Residues 41–61 (ALGVEWVLRRMLLPCDKLLVS) form a helical membrane-spanning segment. The Extracellular portion of the chain corresponds to 62–88 (LGASHFCLQSVVMGKTIYVFLYPMAFP). The helical transmembrane segment at 89–109 (YNPVLQFLAFQWDFLNAATLW) threads the bilayer. The Cytoplasmic portion of the chain corresponds to 110–128 (FSTWLSVFYCVKIATFTHP). A helical transmembrane segment spans residues 129–149 (VFFWLKHKLSGWLPWMVFSYV). Over 150 to 183 (GLSSFTTILFFIGNHRMYQNYLKNHLQPWNVTGN) the chain is Extracellular. A glycan (N-linked (GlcNAc...) asparagine) is linked at Asn179. A helical membrane pass occupies residues 184-204 (SIRSYCEKFYLFPLKMITWTM). Residues 205–234 (PTAVFFICMILLITSLGRHMKKALLTTSGF) are Cytoplasmic-facing. A helical membrane pass occupies residues 235 to 255 (REPSVQAHIKALLALLSFAML). Residues 256-264 (FISYFLSLV) lie on the Extracellular side of the membrane. The chain crosses the membrane as a helical span at residues 265–285 (FSAAGIFPPLDFKFWVWESVI). Topologically, residues 286-318 (YLCAAVHPIILLFSNCRLRAVLKSRRSSRCGTP) are cytoplasmic.

It belongs to the G-protein coupled receptor T2R family.

It is found in the membrane. Functionally, receptor that may play a role in the perception of bitterness and is gustducin-linked. May play a role in sensing the chemical composition of the gastrointestinal content. The activity of this receptor may stimulate alpha gustducin, mediate PLC-beta-2 activation and lead to the gating of TRPM5. This is Taste receptor type 2 member 60 (TAS2R60) from Pan troglodytes (Chimpanzee).